We begin with the raw amino-acid sequence, 166 residues long: Transmembrane protein 278 (166 aa).

Residues Met-1–Asp-15 are compositionally biased toward acidic residues. Positions Met-1–Pro-28 are disordered. 3 helical membrane passes run Gly-39–Ala-59, Leu-65–Leu-85, and Ala-111–Ala-131.

This sequence belongs to the TMEM88 family.

The protein resides in the membrane. The polypeptide is Transmembrane protein 278 (TMEM278) (Bos taurus (Bovine)).